The primary structure comprises 298 residues: MSKLISYAAKSPLRNIRLGATQIICQHASTDCMHMAASASASSSARKTYSTLAVDLTKQQMLLRKPLETLALQITKRSMFIQTQDTPNPDSLKFLPGVEVLGKGNTYDFPSATAAHCSPLAKLLFRVEGVRAVFFGSDFITISKEENGEWGLIKPEVFAVIMDFFASGLPILHEARPNADTEILEDDDETVMMIKELLDTRIRPTVQEDGGDIVFISYEKGVVKLKMQGSCSSCPSSIVTLKNGVQNMLQFYIPEVESVEQVFDEVDKVANSEFERFEKSLKQKDSANPPVSIGGTQN.

The nifU stretch occupies residues 194-262 (IKELLDTRIR…IPEVESVEQV (69 aa)). Residues Cys-231 and Cys-234 each coordinate [4Fe-4S] cluster.

The protein belongs to the NifU family.

It is found in the mitochondrion. In terms of biological role, molecular scaffold for [Fe-S] cluster assembly of mitochondrial iron-sulfur proteins. The sequence is that of NFU1 iron-sulfur cluster scaffold homolog, mitochondrial from Drosophila grimshawi (Hawaiian fruit fly).